Here is a 268-residue protein sequence, read N- to C-terminus: Undecaprenyl-diphosphatase (268 aa).

The next 7 helical transmembrane spans lie at 5–25, 43–63, 84–104, 106–126, 184–204, 213–233, and 248–268; these read SIIS…IPVS, GNTF…LVYF, FSVL…HGFI, AVLF…GVIL, AAEF…TLDL, FDDI…GIVV, and PFAI…WLVG.

Belongs to the UppP family.

The protein resides in the cell inner membrane. It catalyses the reaction di-trans,octa-cis-undecaprenyl diphosphate + H2O = di-trans,octa-cis-undecaprenyl phosphate + phosphate + H(+). Its function is as follows. Catalyzes the dephosphorylation of undecaprenyl diphosphate (UPP). Confers resistance to bacitracin. This is Undecaprenyl-diphosphatase from Sinorhizobium fredii (strain NBRC 101917 / NGR234).